Here is a 175-residue protein sequence, read N- to C-terminus: Large ribosomal subunit protein uL10 (175 aa).

The protein belongs to the universal ribosomal protein uL10 family. In terms of assembly, part of the ribosomal stalk of the 50S ribosomal subunit. The N-terminus interacts with L11 and the large rRNA to form the base of the stalk. The C-terminus forms an elongated spine to which L12 dimers bind in a sequential fashion forming a multimeric L10(L12)X complex.

Forms part of the ribosomal stalk, playing a central role in the interaction of the ribosome with GTP-bound translation factors. The sequence is that of Large ribosomal subunit protein uL10 from Alkalilimnicola ehrlichii (strain ATCC BAA-1101 / DSM 17681 / MLHE-1).